An 833-amino-acid chain; its full sequence is Serine-rich coiled-coil domain-containing protein 2 (833 aa).

The disordered stretch occupies residues 178 to 208 (NRSSGNVQKPRVNSCASRSSSGESLAQSPDN). Residues 191–208 (SCASRSSSGESLAQSPDN) show a composition bias toward polar residues. Phosphoserine is present on serine 222. Disordered regions lie at residues 321–345 (LLKSSRPPFSGPMTVDSNKNPPADM), 424–452 (NRTRITPEEMTLKEEKHESRPSKDIFDSP), 478–508 (KHTSGNNLISPDTDYRAGSSFELSPSDSSDG), and 602–631 (DHYHLSHPGHYHHHGQSDLSRGSPYRESPL). Serine 451 bears the Phosphoserine mark. Low complexity predominate over residues 496–506 (SSFELSPSDSS). A compositionally biased stretch (basic residues) spans 606 to 615 (LSHPGHYHHH). The stretch at 711–747 (DQIYKNEDLLNEITQLKEEIKKKDEKIQLLEQQLATR) forms a coiled coil. A disordered region spans residues 789-833 (FQGMPRTVPPHRRQTSSTTAFQQPSQIYRPRPGKTNKATTYRGPQ). Residues 803–814 (TSSTTAFQQPSQ) are compositionally biased toward polar residues.

Belongs to the CCSER family. Expressed in brain (at protein level).

It is found in the cytoplasm. The protein localises to the cytoskeleton. Microtubule-binding protein which might play a role in microtubule bundling. In Mus musculus (Mouse), this protein is Serine-rich coiled-coil domain-containing protein 2 (Ccser2).